The following is a 586-amino-acid chain: A-type ATP synthase subunit A (586 aa).

Gly-232–Thr-239 provides a ligand contact to ATP.

This sequence belongs to the ATPase alpha/beta chains family. As to quaternary structure, has multiple subunits with at least A(3), B(3), C, D, E, F, H, I and proteolipid K(x).

It is found in the cell membrane. It carries out the reaction ATP + H2O + 4 H(+)(in) = ADP + phosphate + 5 H(+)(out). Component of the A-type ATP synthase that produces ATP from ADP in the presence of a proton gradient across the membrane. The A chain is the catalytic subunit. This is A-type ATP synthase subunit A from Methanococcus maripaludis (strain DSM 14266 / JCM 13030 / NBRC 101832 / S2 / LL).